Here is a 69-residue protein sequence, read N- to C-terminus: MPLTVNCPICKAPVEWVPQSAFKPFCSERCKLIDLGDWASEKHVIPVKAEFDPEAFDEFDLDKGDFFKE.

Zn(2+)-binding residues include Cys-7, Cys-10, Cys-26, and Cys-30.

Belongs to the DNA gyrase inhibitor YacG family. Interacts with GyrB. Requires Zn(2+) as cofactor.

Functionally, inhibits all the catalytic activities of DNA gyrase by preventing its interaction with DNA. Acts by binding directly to the C-terminal domain of GyrB, which probably disrupts DNA binding by the gyrase. The chain is DNA gyrase inhibitor YacG from Shewanella baltica (strain OS223).